Consider the following 427-residue polypeptide: Enolase (427 aa).

Q162 is a binding site for (2R)-2-phosphoglycerate. The Proton donor role is filled by E206. D243, E286, and D313 together coordinate Mg(2+). Positions 338, 367, 368, and 389 each coordinate (2R)-2-phosphoglycerate. The Proton acceptor role is filled by K338.

The protein belongs to the enolase family. Requires Mg(2+) as cofactor.

The protein localises to the cytoplasm. Its subcellular location is the secreted. It is found in the cell surface. It catalyses the reaction (2R)-2-phosphoglycerate = phosphoenolpyruvate + H2O. The protein operates within carbohydrate degradation; glycolysis; pyruvate from D-glyceraldehyde 3-phosphate: step 4/5. Functionally, catalyzes the reversible conversion of 2-phosphoglycerate (2-PG) into phosphoenolpyruvate (PEP). It is essential for the degradation of carbohydrates via glycolysis. The protein is Enolase of Methanopyrus kandleri (strain AV19 / DSM 6324 / JCM 9639 / NBRC 100938).